The sequence spans 671 residues: UvrABC system protein C (671 aa).

The segment at 1–20 is disordered; sequence MPHLPDSMSPEAPAGPAPAT. The segment covering 10–20 has biased composition (low complexity); that stretch reads PEAPAGPAPAT. Positions 37–115 constitute a GIY-YIG domain; that stretch reads PLPGVYRYFD…IKTLNPKYNI (79 aa). A UVR domain is found at 232 to 267; it reads RQVMEALEARMMAHAEKLEFEQAAELRNQVAALSNV.

The protein belongs to the UvrC family. In terms of assembly, interacts with UvrB in an incision complex.

The protein localises to the cytoplasm. Functionally, the UvrABC repair system catalyzes the recognition and processing of DNA lesions. UvrC both incises the 5' and 3' sides of the lesion. The N-terminal half is responsible for the 3' incision and the C-terminal half is responsible for the 5' incision. The sequence is that of UvrABC system protein C from Albidiferax ferrireducens (strain ATCC BAA-621 / DSM 15236 / T118) (Rhodoferax ferrireducens).